A 503-amino-acid chain; its full sequence is MLDLTYETPAPKVISGAKEDWELVIGMEVHAQVTSAAKLFSAASTQFGAEPNNNVSFVDAAMPGMLPTINEYCVEQAVRTGLGLKAEINLHSAFDRKNYFYPDLPQGYQISQLYHPIVGEGEVLVEMGNGTARLVRVERIHLEQDAGKSIHDMDPNMSFVDLNRTGVALMEIVSRPDIRGPEEAAAYLGKLRQILRYLGTCNGDMQSGAMRADVNVSICRPGQYEKYQATQDFSHLGTRCEIKNMNSMRFIQQAIEVEARRQIAIVEAGGTVDQETRLYDPDRNETRSMRSKEEAHDYRYFPDPDLLPLEIEQAWVDDIAANLPELPDAKKARFRNDFGLSDYDASVLTADLDSAGYFEAVAAGRDGKMAANWVINELFGRLKKEDHAITDSPVSPAQLGGIIDLIASDAISGKIAKDVFEICYTTGRDPAEIVETEGMKQVTDTGAIEAAVDEIIAANPDQVAKARENPKLAGWFVGQVMKATGGKANPKVVNQLIAKRLAE.

Belongs to the GatB/GatE family. GatB subfamily. Heterotrimer of A, B and C subunits.

The catalysed reaction is L-glutamyl-tRNA(Gln) + L-glutamine + ATP + H2O = L-glutaminyl-tRNA(Gln) + L-glutamate + ADP + phosphate + H(+). It catalyses the reaction L-aspartyl-tRNA(Asn) + L-glutamine + ATP + H2O = L-asparaginyl-tRNA(Asn) + L-glutamate + ADP + phosphate + 2 H(+). Its function is as follows. Allows the formation of correctly charged Asn-tRNA(Asn) or Gln-tRNA(Gln) through the transamidation of misacylated Asp-tRNA(Asn) or Glu-tRNA(Gln) in organisms which lack either or both of asparaginyl-tRNA or glutaminyl-tRNA synthetases. The reaction takes place in the presence of glutamine and ATP through an activated phospho-Asp-tRNA(Asn) or phospho-Glu-tRNA(Gln). The polypeptide is Aspartyl/glutamyl-tRNA(Asn/Gln) amidotransferase subunit B (Roseobacter denitrificans (strain ATCC 33942 / OCh 114) (Erythrobacter sp. (strain OCh 114))).